The primary structure comprises 179 residues: Large ribosomal subunit protein uL5 (179 aa).

The protein belongs to the universal ribosomal protein uL5 family. As to quaternary structure, part of the 50S ribosomal subunit; part of the 5S rRNA/L5/L18/L25 subcomplex. Contacts the 5S rRNA and the P site tRNA. Forms a bridge to the 30S subunit in the 70S ribosome.

This is one of the proteins that bind and probably mediate the attachment of the 5S RNA into the large ribosomal subunit, where it forms part of the central protuberance. In the 70S ribosome it contacts protein S13 of the 30S subunit (bridge B1b), connecting the 2 subunits; this bridge is implicated in subunit movement. Contacts the P site tRNA; the 5S rRNA and some of its associated proteins might help stabilize positioning of ribosome-bound tRNAs. This Vibrio parahaemolyticus serotype O3:K6 (strain RIMD 2210633) protein is Large ribosomal subunit protein uL5.